The sequence spans 73 residues: Large ribosomal subunit protein bL31 (73 aa).

Residues C16, C18, C38, and C41 each coordinate Zn(2+).

Belongs to the bacterial ribosomal protein bL31 family. Type A subfamily. As to quaternary structure, part of the 50S ribosomal subunit. Requires Zn(2+) as cofactor.

Functionally, binds the 23S rRNA. This Vibrio vulnificus (strain YJ016) protein is Large ribosomal subunit protein bL31.